Here is a 510-residue protein sequence, read N- to C-terminus: Bifunctional purine biosynthesis protein PurH (510 aa).

One can recognise an MGS-like domain in the interval 1–145 (MSKRALISVS…KNFEDVLVVT (145 aa)).

Belongs to the PurH family.

The enzyme catalyses (6R)-10-formyltetrahydrofolate + 5-amino-1-(5-phospho-beta-D-ribosyl)imidazole-4-carboxamide = 5-formamido-1-(5-phospho-D-ribosyl)imidazole-4-carboxamide + (6S)-5,6,7,8-tetrahydrofolate. It carries out the reaction IMP + H2O = 5-formamido-1-(5-phospho-D-ribosyl)imidazole-4-carboxamide. It functions in the pathway purine metabolism; IMP biosynthesis via de novo pathway; 5-formamido-1-(5-phospho-D-ribosyl)imidazole-4-carboxamide from 5-amino-1-(5-phospho-D-ribosyl)imidazole-4-carboxamide (10-formyl THF route): step 1/1. Its pathway is purine metabolism; IMP biosynthesis via de novo pathway; IMP from 5-formamido-1-(5-phospho-D-ribosyl)imidazole-4-carboxamide: step 1/1. This chain is Bifunctional purine biosynthesis protein PurH, found in Oceanobacillus iheyensis (strain DSM 14371 / CIP 107618 / JCM 11309 / KCTC 3954 / HTE831).